Reading from the N-terminus, the 362-residue chain is Methylthioribose-1-phosphate isomerase (362 aa).

Catalysis depends on Asp-252, which acts as the Proton donor.

Belongs to the eIF-2B alpha/beta/delta subunits family. MtnA subfamily.

It is found in the cytoplasm. It localises to the nucleus. It carries out the reaction 5-(methylsulfanyl)-alpha-D-ribose 1-phosphate = 5-(methylsulfanyl)-D-ribulose 1-phosphate. It participates in amino-acid biosynthesis; L-methionine biosynthesis via salvage pathway; L-methionine from S-methyl-5-thio-alpha-D-ribose 1-phosphate: step 1/6. Its function is as follows. Catalyzes the interconversion of methylthioribose-1-phosphate (MTR-1-P) into methylthioribulose-1-phosphate (MTRu-1-P). The protein is Methylthioribose-1-phosphate isomerase of Drosophila persimilis (Fruit fly).